Consider the following 217-residue polypeptide: Elongation factor Ts (217 aa).

Residues 82-85 (TDFV) form an involved in Mg(2+) ion dislocation from EF-Tu region.

Belongs to the EF-Ts family.

The protein resides in the cytoplasm. Functionally, associates with the EF-Tu.GDP complex and induces the exchange of GDP to GTP. It remains bound to the aminoacyl-tRNA.EF-Tu.GTP complex up to the GTP hydrolysis stage on the ribosome. The polypeptide is Elongation factor Ts (Prochlorococcus marinus (strain SARG / CCMP1375 / SS120)).